The chain runs to 610 residues: Protein Spindly-B (610 aa).

The stretch at 1–392 (MEESETVLKL…IDKVKDELSL (392 aa)) forms a coiled coil. Positions 474–610 (TEAHGVSDAT…KPATAQCPQQ (137 aa)) are disordered. 2 stretches are compositionally biased toward basic and acidic residues: residues 493 to 511 (SDDK…KDQD) and 535 to 548 (RIME…DLNK). The segment covering 549–561 (RNPNNCTITSIHP) has biased composition (polar residues). The segment covering 570–583 (SELKKVDEEQEKRK) has biased composition (basic and acidic residues).

The protein belongs to the Spindly family.

It is found in the chromosome. It localises to the centromere. The protein localises to the kinetochore. In terms of biological role, required for the localization of dynein and dynactin to the mitotic kintochore. Dynein is believed to control the initial lateral interaction between the kinetochore and spindle microtubules and to facilitate the subsequent formation of end-on kinetochore-microtubule attachments mediated by the NDC80 complex. In Xenopus laevis (African clawed frog), this protein is Protein Spindly-B (spdl1-b).